The chain runs to 398 residues: Acetate kinase 1 (398 aa).

Asn-9 serves as a coordination point for Mg(2+). Position 16 (Lys-16) interacts with ATP. Arg-89 is a binding site for substrate. Asp-146 acts as the Proton donor/acceptor in catalysis. Residues 206 to 210 (HLGNG), 281 to 283 (DCR), and 329 to 333 (GIGEN) each bind ATP. Glu-384 lines the Mg(2+) pocket.

The protein belongs to the acetokinase family. Homodimer. Mg(2+) is required as a cofactor. Mn(2+) serves as cofactor.

The protein localises to the cytoplasm. The catalysed reaction is acetate + ATP = acetyl phosphate + ADP. The protein operates within metabolic intermediate biosynthesis; acetyl-CoA biosynthesis; acetyl-CoA from acetate: step 1/2. Catalyzes the formation of acetyl phosphate from acetate and ATP. Can also catalyze the reverse reaction. In Aliivibrio fischeri (strain ATCC 700601 / ES114) (Vibrio fischeri), this protein is Acetate kinase 1.